Reading from the N-terminus, the 214-residue chain is Osteoclast-stimulating factor 1 (214 aa).

The SH3 domain occupies 12-71 (GQVKVFRALYTFEPRTPDELYFEEGDILYIADMSDTNWWKGTCKGKTGLIPSNYVAEQAE). ANK repeat units follow at residues 72-101 (SIDN…GVNG), 105-135 (AGST…ELNQ), and 139-168 (LGDT…RTDL).

It localises to the cytoplasm. Functionally, induces bone resorption, acting probably through a signaling cascade which results in the secretion of factor(s) enhancing osteoclast formation and activity. In Xenopus laevis (African clawed frog), this protein is Osteoclast-stimulating factor 1 (ostf1).